A 1073-amino-acid polypeptide reads, in one-letter code: Probable cellulose synthase A catalytic subunit 2 [UDP-forming] (1073 aa).

The Cytoplasmic segment spans residues 1-270 (MDGAKSGKQC…SSSRINPYRM (270 aa)). Zn(2+)-binding residues include cysteine 13, cysteine 16, cysteine 32, cysteine 35, cysteine 40, cysteine 43, cysteine 55, and cysteine 58. Residues 13–59 (CQICGDGVGTAADGELFTACDVCGFPVCRPCYEYERKDGSQACPQCK) form an RING-type; degenerate zinc finger. A disordered region spans residues 66–98 (KGSPPILGDESDDVDADDASDVNYPTSGNQDHK). Positions 74 to 85 (DESDDVDADDAS) are enriched in acidic residues. The chain crosses the membrane as a helical span at residues 271–291 (VIVLRLIVLCIFLHYRITNPV). The Extracellular segment spans residues 292–293 (RN). The helical transmembrane segment at 294 to 314 (AYPLWLLSVICEIWFALSWIL) threads the bilayer. Topologically, residues 315-856 (DQFPKWSPIN…INTTIYPLTS (542 aa)) are cytoplasmic. Positions 353, 359, 360, and 389 each coordinate UDP-alpha-D-glucose. Aspartate 389 is an active-site residue. The stretch at 443-470 (VKDRRAMKREYEEFKVRVNALVAKAQKV) forms a coiled coil. Lysine 530 serves as a coordination point for UDP-alpha-D-glucose. Mn(2+) is bound by residues lysine 531 and aspartate 555. The disordered stretch occupies residues 655–676 (GGRKKTKKSKEKSTEKKKSHKH). The active site involves aspartate 773. A helical transmembrane segment spans residues 857-877 (IPLLLYCILPAICLLTGKFII). Over 878–882 (PEISN) the chain is Extracellular. The helical transmembrane segment at 883–903 (FASIWFISLFLSIFATGILEM) threads the bilayer. Residues 904 to 918 (RWSGVGIDEWWRNEQ) are Cytoplasmic-facing. Residues 919–939 (FWVIGGISAHLFAVFQGLLKV) form a helical membrane-spanning segment. Residues 940-969 (LAGIDTSFTVTSKASDEEGDFAELYMFKWT) are Extracellular-facing. Residues 970-990 (TLLIPPTTILIINLVGVVAGI) traverse the membrane as a helical segment. Topologically, residues 991–1001 (SYAINSGYQSW) are cytoplasmic. A helical transmembrane segment spans residues 1002–1022 (GPLFGKLFFAFWVIVHLYPFL). Over 1023–1031 (KGLMGRQNR) the chain is Extracellular. A helical membrane pass occupies residues 1032 to 1052 (TPTIVVVWAILLASIFSLLWV). Residues 1053-1073 (RIDPFTTRVTGPDTQKCGINC) lie on the Cytoplasmic side of the membrane.

Belongs to the glycosyltransferase 2 family. Plant cellulose synthase subfamily. Mn(2+) is required as a cofactor. It depends on Zn(2+) as a cofactor.

It is found in the cell membrane. The enzyme catalyses [(1-&gt;4)-beta-D-glucosyl](n) + UDP-alpha-D-glucose = [(1-&gt;4)-beta-D-glucosyl](n+1) + UDP + H(+). It participates in glycan metabolism; plant cellulose biosynthesis. Functionally, probable catalytic subunit of cellulose synthase terminal complexes ('rosettes'), required for beta-1,4-glucan microfibril crystallization, a major mechanism of the cell wall formation. The chain is Probable cellulose synthase A catalytic subunit 2 [UDP-forming] (CESA2) from Oryza sativa subsp. japonica (Rice).